The primary structure comprises 152 residues: 6,7-dimethyl-8-ribityllumazine synthase (152 aa).

5-amino-6-(D-ribitylamino)uracil is bound by residues phenylalanine 22, 56 to 58 (AFE), and 79 to 81 (AVI). 84–85 (AT) is a (2S)-2-hydroxy-3-oxobutyl phosphate binding site. The active-site Proton donor is histidine 87. A 5-amino-6-(D-ribitylamino)uracil-binding site is contributed by phenylalanine 112. Arginine 126 is a (2S)-2-hydroxy-3-oxobutyl phosphate binding site.

The protein belongs to the DMRL synthase family.

The enzyme catalyses (2S)-2-hydroxy-3-oxobutyl phosphate + 5-amino-6-(D-ribitylamino)uracil = 6,7-dimethyl-8-(1-D-ribityl)lumazine + phosphate + 2 H2O + H(+). It functions in the pathway cofactor biosynthesis; riboflavin biosynthesis; riboflavin from 2-hydroxy-3-oxobutyl phosphate and 5-amino-6-(D-ribitylamino)uracil: step 1/2. Functionally, catalyzes the formation of 6,7-dimethyl-8-ribityllumazine by condensation of 5-amino-6-(D-ribitylamino)uracil with 3,4-dihydroxy-2-butanone 4-phosphate. This is the penultimate step in the biosynthesis of riboflavin. This is 6,7-dimethyl-8-ribityllumazine synthase from Carboxydothermus hydrogenoformans (strain ATCC BAA-161 / DSM 6008 / Z-2901).